The sequence spans 334 residues: Glyceraldehyde-3-phosphate dehydrogenase (334 aa).

Residues 12–13 (TI) and glycine 111 contribute to the NAD(+) site. Residue 140-142 (SCN) participates in D-glyceraldehyde 3-phosphate binding. The active-site Nucleophile is cysteine 141. An NAD(+)-binding site is contributed by arginine 167. 192–193 (HG) lines the D-glyceraldehyde 3-phosphate pocket. Glutamine 298 is an NAD(+) binding site.

It belongs to the glyceraldehyde-3-phosphate dehydrogenase family. In terms of assembly, homotetramer.

It is found in the encapsulin nanocompartment. The enzyme catalyses D-glyceraldehyde 3-phosphate + phosphate + NADP(+) = (2R)-3-phospho-glyceroyl phosphate + NADPH + H(+). The catalysed reaction is D-glyceraldehyde 3-phosphate + phosphate + NAD(+) = (2R)-3-phospho-glyceroyl phosphate + NADH + H(+). It participates in carbohydrate degradation; glycolysis; pyruvate from D-glyceraldehyde 3-phosphate: step 1/5. Functionally, possible cargo protein of a type 4B encapsulin nanocompartment. Active in the presence of NAD and NADP, prefers NADP. The polypeptide is Glyceraldehyde-3-phosphate dehydrogenase (gap) (Pyrococcus furiosus (strain ATCC 43587 / DSM 3638 / JCM 8422 / Vc1)).